Consider the following 57-residue polypeptide: Large ribosomal subunit protein eL37 (57 aa).

The Zn(2+) site is built by C20, C23, C35, and C38. Residues 20-38 (CRRCGEKSYHKQKKVCASC) form a C4-type zinc finger.

The protein belongs to the eukaryotic ribosomal protein eL37 family. Zn(2+) serves as cofactor.

Functionally, binds to the 23S rRNA. This is Large ribosomal subunit protein eL37 from Natronomonas pharaonis (strain ATCC 35678 / DSM 2160 / CIP 103997 / JCM 8858 / NBRC 14720 / NCIMB 2260 / Gabara) (Halobacterium pharaonis).